A 90-amino-acid polypeptide reads, in one-letter code: Putative membrane protein insertion efficiency factor (90 aa).

This sequence belongs to the UPF0161 family.

The protein resides in the cell inner membrane. Could be involved in insertion of integral membrane proteins into the membrane. In Bordetella bronchiseptica (strain ATCC BAA-588 / NCTC 13252 / RB50) (Alcaligenes bronchisepticus), this protein is Putative membrane protein insertion efficiency factor.